Consider the following 1135-residue polypeptide: Putative beta-hexosaminidase (1135 aa).

Positions 1-23 (MKWVKSGVGILGILLTICHAVTS) are cleaved as a signal peptide. 2 disordered regions span residues 970-1082 (AHPP…LPGQ) and 1107-1135 (QMRG…QQAG). The span at 986-1003 (NMPPPFPPRPPFGPPMLP) shows a compositional bias: pro residues. Composition is skewed to low complexity over residues 1004–1026 (PGQM…TALG) and 1043–1073 (TGQA…LPGQ).

Belongs to the glycosyl hydrolase 20 family. As to expression, prismatic layer of shell (at protein level). Expressed primarily in the mantle with highest level in the mantle edge and lower level in the mantle pallium.

It is found in the secreted. It carries out the reaction Hydrolysis of terminal non-reducing N-acetyl-D-hexosamine residues in N-acetyl-beta-D-hexosaminides.. It participates in glycan degradation; chitin degradation. This Margaritifera margaritifera (Freshwater pearl mussel) protein is Putative beta-hexosaminidase.